An 87-amino-acid chain; its full sequence is Small ribosomal subunit protein bS21m (87 aa).

This sequence belongs to the bacterial ribosomal protein bS21 family. In terms of assembly, component of the mitochondrial ribosome small subunit (28S) which comprises a 12S rRNA and about 30 distinct proteins.

The protein localises to the mitochondrion. In Mus musculus (Mouse), this protein is Small ribosomal subunit protein bS21m (Mrps21).